Here is a 97-residue protein sequence, read N- to C-terminus: Aspartyl/glutamyl-tRNA(Asn/Gln) amidotransferase subunit C (97 aa).

The disordered stretch occupies residues 59–78 (STGKLRPDEPAQPLSRDDAL). Residues 63–78 (LRPDEPAQPLSRDDAL) are compositionally biased toward basic and acidic residues.

This sequence belongs to the GatC family. Heterotrimer of A, B and C subunits.

The catalysed reaction is L-glutamyl-tRNA(Gln) + L-glutamine + ATP + H2O = L-glutaminyl-tRNA(Gln) + L-glutamate + ADP + phosphate + H(+). The enzyme catalyses L-aspartyl-tRNA(Asn) + L-glutamine + ATP + H2O = L-asparaginyl-tRNA(Asn) + L-glutamate + ADP + phosphate + 2 H(+). Allows the formation of correctly charged Asn-tRNA(Asn) or Gln-tRNA(Gln) through the transamidation of misacylated Asp-tRNA(Asn) or Glu-tRNA(Gln) in organisms which lack either or both of asparaginyl-tRNA or glutaminyl-tRNA synthetases. The reaction takes place in the presence of glutamine and ATP through an activated phospho-Asp-tRNA(Asn) or phospho-Glu-tRNA(Gln). The protein is Aspartyl/glutamyl-tRNA(Asn/Gln) amidotransferase subunit C of Metallosphaera sedula (strain ATCC 51363 / DSM 5348 / JCM 9185 / NBRC 15509 / TH2).